The sequence spans 198 residues: dITP/XTP pyrophosphatase (198 aa).

Substrate is bound at residue threonine 7 to lysine 12. Residues glutamate 40 and aspartate 69 each coordinate Mg(2+). The active-site Proton acceptor is aspartate 69. Residues threonine 70, phenylalanine 151–aspartate 154, lysine 174, and histidine 179–arginine 180 each bind substrate.

It belongs to the HAM1 NTPase family. In terms of assembly, homodimer. The cofactor is Mg(2+).

It catalyses the reaction XTP + H2O = XMP + diphosphate + H(+). It carries out the reaction dITP + H2O = dIMP + diphosphate + H(+). The catalysed reaction is ITP + H2O = IMP + diphosphate + H(+). Its function is as follows. Pyrophosphatase that catalyzes the hydrolysis of nucleoside triphosphates to their monophosphate derivatives, with a high preference for the non-canonical purine nucleotides XTP (xanthosine triphosphate), dITP (deoxyinosine triphosphate) and ITP. Seems to function as a house-cleaning enzyme that removes non-canonical purine nucleotides from the nucleotide pool, thus preventing their incorporation into DNA/RNA and avoiding chromosomal lesions. This is dITP/XTP pyrophosphatase from Thermoanaerobacter pseudethanolicus (strain ATCC 33223 / 39E) (Clostridium thermohydrosulfuricum).